The sequence spans 1083 residues: MISMSCVPKEEEGEDTQIKTELHDHAADNPVRYASLESVYSVSSSSSSLCCKTAAGSHKKVNALKLPMSDSFELQPHRRPEIVHVYCRRKRRRRRRRESFLELAILQNEGVERDDRIVKIESAELDDEKEEENKKKKQKKRRIGNGELMKLGVDSTTLSVSATPPLRGCRIKAVCSGNKQDGSSRSKRNTVKNQEKVVTASATAKKWVRLSYDGVDPKHFIGLQCKVFWPLDAVWYPGSIVGYNVETKHHIVKYGDGDGEELALRREKIKFLISRDDMELLNMKFGTNDVVVDGQDYDELVILAASFEECQDFEPRDIIWAKLTGHAMWPAIIVDESVIVKRKGLNNKISGGRSVLVQFFGTHDFARIQVKQAVSFLKGLLSRSPLKCKQPRFEEAMEEAKMYLKEYKLPGRMDQLQKVADTDCSERINSGEEDSSNSGDDYTKDGEVWLRPTELGDCLHRIGDLQIINLGRIVTDSEFFKDSKHTWPEGYTATRKFISLKDPNASAMYKMEVLRDAESKTRPVFRVTTNSGEQFKGDTPSACWNKIYNRIKKIQIASDNPDVLGEGLHESGTDMFGFSNPEVDKLIQGLLQSRPPSKVSQRKYSSGKYQDHPTGYRPVRVEWKDLDKCNVCHMDEEYENNLFLQCDKCRMMVHTRCYGQLEPHNGILWLCNLCRPVALDIPPRCCLCPVVGGAMKPTTDGRWAHLACAIWIPETCLLDVKKMEPIDGVKKVSKDRWKLLCSICGVSYGACIQCSNNTCRVAYHPLCARAAGLCVELADEDRLFLLSMDDDEADQCIRLLSFCKRHRQTSNYHLETEYMIKPAHNIAEYLPPPNPSGCARTEPYNYLGRRGRKEPEALAGASSKRLFVENQPYIVGGYSRHEFSTYERIYGSKMSQITTPSNILSMAEKYTFMKETYRKRLAFGKSGIHGFGIFAKLPHRAGDMVIEYTGELVRPPIADKREHLIYNSMVGAGTYMFRIDNERVIDATRTGSIAHLINHSCEPNCYSRVISVNGDEHIIIFAKRDVAKWEELTYDYRFFSIDERLACYCGFPRCRGVVNDTEAEERQANIHASRCELKEWTES.

The Nuclear localization signal motif lies at 77 to 84 (HRRPEIVH). Residues 315–379 (PRDIIWAKLT…VKQAVSFLKG (65 aa)) form the PWWP domain. A disordered region spans residues 422–443 (TDCSERINSGEEDSSNSGDDYT). An FYR N-terminal domain is found at 457 to 516 (DCLHRIGDLQIINLGRIVTDSEFFKDSKHTWPEGYTATRKFISLKDPNASAMYKMEVLRD). In terms of domain architecture, FYR C-terminal spans 520–604 (KTRPVFRVTT…PPSKVSQRKY (85 aa)). The PHD-type 1 zinc finger occupies 626-677 (LDKCNVCHMDEEYENNLFLQCDKCRMMVHTRCYGQLEPHNGILWLCNLCRPV). The C2HC pre-PHD-type zinc-finger motif lies at 682–715 (PPRCCLCPVVGGAMKPTTDGRWAHLACAIWIPET). The segment at 682-807 (PPRCCLCPVV…RLLSFCKRHR (126 aa)) is extended PHD domain (ePHD). The segment at 739–807 (LLCSICGVSY…RLLSFCKRHR (69 aa)) adopts a PHD-type 2 zinc-finger fold. Positions 919–1037 (KRLAFGKSGI…KWEELTYDYR (119 aa)) constitute an SET domain. His-929 lines the S-adenosyl-L-methionine pocket. The O-linked (GlcNAc) serine glycan is linked to Ser-968. Residues Tyr-975 and 998 to 999 (NH) each bind S-adenosyl-L-methionine. Cys-1001 contacts Zn(2+). S-adenosyl-L-methionine is bound at residue Tyr-1036. In terms of domain architecture, Post-SET spans 1043–1059 (ERLACYCGFPRCRGVVN). Cys-1047, Cys-1049, and Cys-1054 together coordinate Zn(2+).

It belongs to the class V-like SAM-binding methyltransferase superfamily. Histone-lysine methyltransferase family. TRX/MLL subfamily. In terms of processing, activated via O-glycosylation. As to expression, expressed in roots, leaves and flowers and, to a lower extent, in young seedlings.

It is found in the nucleus. The enzyme catalyses N(6)-methyl-L-lysyl-[histone] + S-adenosyl-L-methionine = N(6),N(6)-dimethyl-L-lysyl-[histone] + S-adenosyl-L-homocysteine + H(+). Functionally, histone methyltransferase. Dimethylates 'Lys-4' of histone H3 (H3K4me2). H3 'Lys-4' methylation represents a specific tag for epigenetic transcriptional activation. Methylates only a limited fraction of nucleosomes of target genes (e.g. NAP and XTH33). Involved in epigenetic regulation of the floral repressor FLC and FT to prevent the transition from vegetative to reproductive development. The protein is Histone-lysine N-methyltransferase ATX2 of Arabidopsis thaliana (Mouse-ear cress).